The sequence spans 441 residues: Deoxyguanosinetriphosphate triphosphohydrolase-like protein (441 aa).

The HD domain occupies 59 to 250 (RLTHSLEVSQ…MELADDTAYA (192 aa)).

The protein belongs to the dGTPase family. Type 2 subfamily.

The protein is Deoxyguanosinetriphosphate triphosphohydrolase-like protein of Shewanella loihica (strain ATCC BAA-1088 / PV-4).